The primary structure comprises 138 residues: uncharacterized protein (138 aa).

The disordered stretch occupies residues 1-27 (MEGELIENNGLDIYDTSETPKKRGRPA).

This is an uncharacterized protein from Escherichia coli (strain K12).